A 425-amino-acid chain; its full sequence is UDP-N-acetylglucosamine 1-carboxyvinyltransferase (425 aa).

24–25 (KN) contributes to the phosphoenolpyruvate binding site. Position 95 (Arg-95) interacts with UDP-N-acetyl-alpha-D-glucosamine. The active-site Proton donor is Cys-119. Position 119 is a 2-(S-cysteinyl)pyruvic acid O-phosphothioketal (Cys-119). UDP-N-acetyl-alpha-D-glucosamine is bound by residues 124–128 (RPVDQ), Asp-308, and Val-330.

The protein belongs to the EPSP synthase family. MurA subfamily.

It localises to the cytoplasm. It carries out the reaction phosphoenolpyruvate + UDP-N-acetyl-alpha-D-glucosamine = UDP-N-acetyl-3-O-(1-carboxyvinyl)-alpha-D-glucosamine + phosphate. Its pathway is cell wall biogenesis; peptidoglycan biosynthesis. Functionally, cell wall formation. Adds enolpyruvyl to UDP-N-acetylglucosamine. The sequence is that of UDP-N-acetylglucosamine 1-carboxyvinyltransferase from Deinococcus deserti (strain DSM 17065 / CIP 109153 / LMG 22923 / VCD115).